The primary structure comprises 601 residues: Glutathione-regulated potassium-efflux system protein KefB (601 aa).

The next 13 membrane-spanning stretches (helical) occupy residues 4–24, 29–49, 55–75, 87–107, 111–131, 152–172, 177–197, 207–227, 230–250, 262–282, 284–304, 324–344, and 356–376; these read ADLLTAGVLFLFAAVAAVPLA, IGAVLGYLLAGIAIGPWGLGF, EILHFSELGVVFLMFIIGLEL, IFGVGAAQVLLSAAVLAGLLM, FLWQAAVVGGIGLAMSSTAMA, VLLFQDLAVIPALALVPLLAG, HFDWFKVAMKVLAFAVMLIGG, FIAASGVREVFTAATLLLVLS, LFMDALGLSMALGTFIAGVLL, AIDPFKGLLLGLFFISVGMSL, LGVLYTHLLWVAASVVILVVI, MQFASVLSQGGEFAFVLFSTA, and ALLLVTVTLSMMTTPLLMKGI. The region spanning 400–519 is the RCK N-terminal domain; the sequence is KPQVIVVGFG…AGVTQFSRET (120 aa).

The protein belongs to the monovalent cation:proton antiporter 2 (CPA2) transporter (TC 2.A.37) family. KefB subfamily. In terms of assembly, interacts with the regulatory subunit KefG.

It localises to the cell inner membrane. Pore-forming subunit of a potassium efflux system that confers protection against electrophiles. Catalyzes K(+)/H(+) antiport. This is Glutathione-regulated potassium-efflux system protein KefB from Salmonella heidelberg (strain SL476).